The chain runs to 523 residues: ATP synthase subunit alpha (523 aa).

Residue 179-186 participates in ATP binding; it reads GDRQTGKT.

Belongs to the ATPase alpha/beta chains family. In terms of assembly, F-type ATPases have 2 components, CF(1) - the catalytic core - and CF(0) - the membrane proton channel. CF(1) has five subunits: alpha(3), beta(3), gamma(1), delta(1), epsilon(1). CF(0) has three main subunits: a(1), b(2) and c(9-12). The alpha and beta chains form an alternating ring which encloses part of the gamma chain. CF(1) is attached to CF(0) by a central stalk formed by the gamma and epsilon chains, while a peripheral stalk is formed by the delta and b chains.

It localises to the cell inner membrane. It carries out the reaction ATP + H2O + 4 H(+)(in) = ADP + phosphate + 5 H(+)(out). Its function is as follows. Produces ATP from ADP in the presence of a proton gradient across the membrane. The alpha chain is a regulatory subunit. This chain is ATP synthase subunit alpha, found in Vibrio vulnificus (strain YJ016).